We begin with the raw amino-acid sequence, 247 residues long: Opacity protein opA52 (247 aa).

A signal peptide is located at residue Ala-1.

The protein belongs to the opacity porin family.

Its subcellular location is the cell outer membrane. Its function is as follows. Implicated in a number of adherence functions. OPA proteins are implicated in pathogenesis and are subject to phase variation. In Neisseria gonorrhoeae, this protein is Opacity protein opA52 (opaG).